The primary structure comprises 417 residues: Dihydrolipoyllysine-residue succinyltransferase component of 2-oxoglutarate dehydrogenase complex (417 aa).

Residues 1 to 76 form the Lipoyl-binding domain; sequence MAEIKVPELA…QVGEIIGTIS (76 aa). Lys-42 bears the N6-lipoyllysine mark. A disordered region spans residues 75 to 191; it reads ISEGAGESSA…SFDKPVEVQK (117 aa). 2 stretches are compositionally biased toward basic and acidic residues: residues 89-103 and 152-163; these read EKTE…EKQA and RKQDVEAYEKPA. The 38-residue stretch at 123–160 folds into the Peripheral subunit-binding (PSBD) domain; it reads IASPSARKLAREKGIDLSQVPTGDPLGRVRKQDVEAYE. Over residues 164 to 182 the composition is skewed to low complexity; sequence SKPAPQQKQQPQAQKAQQS. Residues His-388 and Asp-392 contribute to the active site.

Belongs to the 2-oxoacid dehydrogenase family. As to quaternary structure, forms a 24-polypeptide structural core with octahedral symmetry. Part of the 2-oxoglutarate dehydrogenase (OGDH) complex composed of E1 (2-oxoglutarate dehydrogenase), E2 (dihydrolipoamide succinyltransferase) and E3 (dihydrolipoamide dehydrogenase); the complex contains multiple copies of the three enzymatic components (E1, E2 and E3). (R)-lipoate serves as cofactor.

It carries out the reaction N(6)-[(R)-dihydrolipoyl]-L-lysyl-[protein] + succinyl-CoA = N(6)-[(R)-S(8)-succinyldihydrolipoyl]-L-lysyl-[protein] + CoA. Its pathway is amino-acid degradation; L-lysine degradation via saccharopine pathway; glutaryl-CoA from L-lysine: step 6/6. In terms of biological role, E2 component of the 2-oxoglutarate dehydrogenase (OGDH) complex which catalyzes the second step in the conversion of 2-oxoglutarate to succinyl-CoA and CO(2). This chain is Dihydrolipoyllysine-residue succinyltransferase component of 2-oxoglutarate dehydrogenase complex (odhB), found in Bacillus subtilis (strain 168).